The sequence spans 29 residues: LFGGLLDKLREKIKKYCNKENLDKACSKL.

The protein belongs to the myrmexin family. Heterodimer composed of subunit SS2 and subunit LS1 (U1-PSDTX-Pt1e), and heterodimer composed of subunit SS2 and LS2 (U1-PSDTX-Pt1c); disulfide-linked. As to expression, expressed by the venom gland.

The protein localises to the secreted. Functionally, this heterodimer may have anti-inflammatory properties, since the myrmexin complex (composed of 6 SS-LS heterodimers) inhibits carrageenin-induced edema in a dose-dependent manner (after subcutaneous injection into rats). The chain is U1-pseudomyrmecitoxin-Pt1 subunit SS2 from Pseudomyrmex triplarinus (Ant).